The sequence spans 163 residues: Putative 4-hydroxy-4-methyl-2-oxoglutarate aldolase (163 aa).

Substrate is bound by residues 76–79 (GDMI) and Arg98. Position 99 (Asp99) interacts with a divalent metal cation.

It belongs to the class II aldolase/RraA-like family. As to quaternary structure, homotrimer. It depends on a divalent metal cation as a cofactor.

It catalyses the reaction 4-hydroxy-4-methyl-2-oxoglutarate = 2 pyruvate. The catalysed reaction is oxaloacetate + H(+) = pyruvate + CO2. Its function is as follows. Catalyzes the aldol cleavage of 4-hydroxy-4-methyl-2-oxoglutarate (HMG) into 2 molecules of pyruvate. Also contains a secondary oxaloacetate (OAA) decarboxylase activity due to the common pyruvate enolate transition state formed following C-C bond cleavage in the retro-aldol and decarboxylation reactions. In Pseudomonas fluorescens, this protein is Putative 4-hydroxy-4-methyl-2-oxoglutarate aldolase.